Consider the following 165-residue polypeptide: Large ribosomal subunit protein uL10 (165 aa).

Belongs to the universal ribosomal protein uL10 family. As to quaternary structure, part of the ribosomal stalk of the 50S ribosomal subunit. The N-terminus interacts with L11 and the large rRNA to form the base of the stalk. The C-terminus forms an elongated spine to which L12 dimers bind in a sequential fashion forming a multimeric L10(L12)X complex.

Functionally, forms part of the ribosomal stalk, playing a central role in the interaction of the ribosome with GTP-bound translation factors. This Burkholderia mallei (strain NCTC 10229) protein is Large ribosomal subunit protein uL10.